The chain runs to 250 residues: Isoprenyl transferase (250 aa).

Asp-27 is a catalytic residue. Asp-27 is a binding site for Mg(2+). Substrate contacts are provided by residues 28 to 31 (GNRR), Trp-32, His-48, and 76 to 78 (STE). Asn-79 functions as the Proton acceptor in the catalytic mechanism. Residues Phe-80, Arg-82, Arg-199, and 205–207 (RVS) each bind substrate. Glu-218 serves as a coordination point for Mg(2+).

It belongs to the UPP synthase family. Homodimer. Requires Mg(2+) as cofactor.

Its function is as follows. Catalyzes the condensation of isopentenyl diphosphate (IPP) with allylic pyrophosphates generating different type of terpenoids. The chain is Isoprenyl transferase from Chlamydia pneumoniae (Chlamydophila pneumoniae).